The following is a 525-amino-acid chain: MALDIHAHRILILDFGSQYTQLIARRVREIGVYCELHPFDMDDEAIREFNPRGIILAGGPESVHEANSPRAPQAVFDLNVPLLGICYGMQTMAEQLGGKVEGSDLREFGYARVDVVGKSRLLDGIEDHVDGDGVLGLDVWMSHGDKVTQMPGNFNILASTPSCPIAGMFDDARGYYGVQFHPEVTHTKQGGRILSRFVQDICGCEALWTPSNIVEDAIAQVRQQVGSANVLLGLSGGVDSSVVAALLHRAIGDQLTCVFVDNGLLRLHEGDQVMAMFKENMGVKVIRADAEKQFLDNLEGEADPEKKRKIIGRTFIDVFDAEASKLDNIQFLAQGTIYPDVIESAGAKSGKAHVIKSHHNVGGLPEEMNLKLVEPLRELFKDEVRKIGLELGLPYDMVYRHPFPGPGLGVRILGEVKKEYADILRRADHIFIEELRKADWYHKTSQAFVVFQPVKSVGVVGDGRRYAWVVALRAVETVDFMTARWAHLPYDLLETVSGRIINEIDGISRVTYDVSSKPPATIEWE.

One can recognise a Glutamine amidotransferase type-1 domain in the interval 9–207; that stretch reads RILILDFGSQ…VQDICGCEAL (199 aa). Cysteine 86 serves as the catalytic Nucleophile. Residues histidine 181 and glutamate 183 contribute to the active site. The GMPS ATP-PPase domain maps to 208–400; it reads WTPSNIVEDA…LGLPYDMVYR (193 aa). 235–241 serves as a coordination point for ATP; it reads SGGVDSS.

As to quaternary structure, homodimer.

It carries out the reaction XMP + L-glutamine + ATP + H2O = GMP + L-glutamate + AMP + diphosphate + 2 H(+). Its pathway is purine metabolism; GMP biosynthesis; GMP from XMP (L-Gln route): step 1/1. In terms of biological role, catalyzes the synthesis of GMP from XMP. This chain is GMP synthase [glutamine-hydrolyzing], found in Pseudomonas putida (strain W619).